The sequence spans 312 residues: Borealin-2 (312 aa).

Positions 1 to 10 (MPPRKAPAKR) are enriched in basic residues. Residues 1–26 (MPPRKAPAKRRSTDSGVERDRGALSQ) form a disordered region. Residues 11-26 (RSTDSGVERDRGALSQ) show a composition bias toward basic and acidic residues.

Belongs to the borealin family. In terms of assembly, component of the CPC complex.

The protein localises to the nucleus. It is found in the chromosome. It localises to the centromere. In terms of biological role, component of the chromosomal passenger complex (CPC), a complex that acts as a key regulator of mitosis. The CPC complex has essential functions at the centromere in ensuring correct chromosome alignment and segregation and is required for chromatin-induced microtubule stabilization and spindle assembly. The protein is Borealin-2 of Gallus gallus (Chicken).